The following is a 427-amino-acid chain: Adenylosuccinate synthetase (427 aa).

GTP-binding positions include 12 to 18 (GDEGKGK) and 40 to 42 (GHT). D13 serves as the catalytic Proton acceptor. Residues D13 and G40 each contribute to the Mg(2+) site. Residues 13–16 (DEGK), 38–41 (NAGH), T128, R142, Q223, T238, and R302 contribute to the IMP site. H41 (proton donor) is an active-site residue. A substrate-binding site is contributed by 298–304 (TTTGRPR). Residues R304, 330–332 (SID), and 412–414 (SVG) contribute to the GTP site.

This sequence belongs to the adenylosuccinate synthetase family. Homodimer. The cofactor is Mg(2+).

It localises to the cytoplasm. It catalyses the reaction IMP + L-aspartate + GTP = N(6)-(1,2-dicarboxyethyl)-AMP + GDP + phosphate + 2 H(+). It participates in purine metabolism; AMP biosynthesis via de novo pathway; AMP from IMP: step 1/2. Plays an important role in the de novo pathway of purine nucleotide biosynthesis. Catalyzes the first committed step in the biosynthesis of AMP from IMP. The sequence is that of Adenylosuccinate synthetase from Staphylococcus aureus (strain N315).